A 368-amino-acid chain; its full sequence is P2X receptor C (368 aa).

The Cytoplasmic portion of the chain corresponds to 1–24 (MLDWDSILAYNTIKVVRIRDRRLG). Residues 25-45 (ILHLIFMIAIISYVVIYSAII) form a helical membrane-spanning segment. The Lumenal segment spans residues 46-368 (KKGYLSIEEP…DKLYHNIEAL (323 aa)). The segment at 282–295 (RHAIRLIFIQTGVI) is pore-forming motif.

It belongs to the P2X receptor family.

It localises to the contractile vacuole membrane. Functionally, P2X receptors are ligand-gated ion channels that play a role in intracellular calcium signaling. ATP does not evoke inward currents in p2xC. Not essential for osmoregulation. The polypeptide is P2X receptor C (p2xC) (Dictyostelium discoideum (Social amoeba)).